Reading from the N-terminus, the 202-residue chain is MRTATITRETKETQIYLTLDLDGSGRSEIDTNIGFLDHMLTLLAFHSDFDIKLTAHGDHENLGMDPHHLIEDVAISLGKCINEALGDKLGIRRYGSFTIPMDEALVTCDLDISGRPYLVFNADLSGNQKLGGYDTEMTEEFFRALAFNAGITLHINEHYGKNTHHIIEGIFKSMARALKQAISIDETKVGKIPSSKGVLRAN.

The protein belongs to the imidazoleglycerol-phosphate dehydratase family.

It is found in the cytoplasm. It carries out the reaction D-erythro-1-(imidazol-4-yl)glycerol 3-phosphate = 3-(imidazol-4-yl)-2-oxopropyl phosphate + H2O. Its pathway is amino-acid biosynthesis; L-histidine biosynthesis; L-histidine from 5-phospho-alpha-D-ribose 1-diphosphate: step 6/9. This chain is Imidazoleglycerol-phosphate dehydratase, found in Lactococcus lactis subsp. cremoris (strain SK11).